A 316-amino-acid polypeptide reads, in one-letter code: Transaldolase (316 aa).

The Schiff-base intermediate with substrate role is filled by lysine 127.

The protein belongs to the transaldolase family. Type 2 subfamily.

Its subcellular location is the cytoplasm. It catalyses the reaction D-sedoheptulose 7-phosphate + D-glyceraldehyde 3-phosphate = D-erythrose 4-phosphate + beta-D-fructose 6-phosphate. The protein operates within carbohydrate degradation; pentose phosphate pathway; D-glyceraldehyde 3-phosphate and beta-D-fructose 6-phosphate from D-ribose 5-phosphate and D-xylulose 5-phosphate (non-oxidative stage): step 2/3. In terms of biological role, transaldolase is important for the balance of metabolites in the pentose-phosphate pathway. In Helicobacter pylori (strain P12), this protein is Transaldolase.